The primary structure comprises 157 residues: Protein Smg homolog (157 aa).

The protein belongs to the Smg family.

The sequence is that of Protein Smg homolog from Shewanella pealeana (strain ATCC 700345 / ANG-SQ1).